Here is a 535-residue protein sequence, read N- to C-terminus: uncharacterized protein (535 aa).

6 helical membrane passes run 63-83 (LTGIVVALLVVTFAFPVPSIY), 90-110 (VTFGVAPAYATLALAIGTYWI), 143-163 (VAAVHLILWDIGGALLATLYG), 168-188 (VFVTIILFSVTICGVLVATNC), 226-246 (SLGSGVPVTGIATTALYVLLV), and 258-278 (VLILSITTLIFGFLVMWILAW). The region spanning 279–330 (LTAAPVRVVRAALKRVEQGDLRGDLVVFDGTELGELQRGFNAMVNGLRERER) is the HAMP domain. Residues 362-486 (AVVFVDIVGS…KPVNQAARLC (125 aa)) form the Guanylate cyclase domain.

The protein belongs to the adenylyl cyclase class-3 family.

The protein resides in the cell membrane. This is an uncharacterized protein from Mycobacterium tuberculosis (strain ATCC 25618 / H37Rv).